Reading from the N-terminus, the 313-residue chain is Ribosomal RNA small subunit methyltransferase H (313 aa).

S-adenosyl-L-methionine is bound by residues 33-35 (AGH), D53, F82, D103, and Q110.

Belongs to the methyltransferase superfamily. RsmH family.

It localises to the cytoplasm. The catalysed reaction is cytidine(1402) in 16S rRNA + S-adenosyl-L-methionine = N(4)-methylcytidine(1402) in 16S rRNA + S-adenosyl-L-homocysteine + H(+). Functionally, specifically methylates the N4 position of cytidine in position 1402 (C1402) of 16S rRNA. The protein is Ribosomal RNA small subunit methyltransferase H of Ruminiclostridium cellulolyticum (strain ATCC 35319 / DSM 5812 / JCM 6584 / H10) (Clostridium cellulolyticum).